Consider the following 592-residue polypeptide: V-type ATP synthase alpha chain (592 aa).

233–240 (GPFGSGKT) is an ATP binding site.

Belongs to the ATPase alpha/beta chains family.

It carries out the reaction ATP + H2O + 4 H(+)(in) = ADP + phosphate + 5 H(+)(out). Its function is as follows. Produces ATP from ADP in the presence of a proton gradient across the membrane. The V-type alpha chain is a catalytic subunit. This Clostridium botulinum (strain Loch Maree / Type A3) protein is V-type ATP synthase alpha chain.